Here is a 148-residue protein sequence, read N- to C-terminus: [Ribosomal protein bS18]-alanine N-acetyltransferase (148 aa).

Residues 2 to 147 (NTISILSTTD…DAIIMALPIS (146 aa)) enclose the N-acetyltransferase domain. Acetyl-CoA is bound by residues 69-71 (IAV) and 77-82 (RRGLGR). Glu103 functions as the Proton acceptor in the catalytic mechanism. Asn108 contacts acetyl-CoA. Residue Tyr115 is the Proton donor of the active site.

The protein belongs to the acetyltransferase family. RimI subfamily.

The protein resides in the cytoplasm. The catalysed reaction is N-terminal L-alanyl-[ribosomal protein bS18] + acetyl-CoA = N-terminal N(alpha)-acetyl-L-alanyl-[ribosomal protein bS18] + CoA + H(+). Its function is as follows. Acetylates the N-terminal alanine of ribosomal protein bS18. The polypeptide is [Ribosomal protein bS18]-alanine N-acetyltransferase (Salmonella typhimurium (strain LT2 / SGSC1412 / ATCC 700720)).